A 689-amino-acid polypeptide reads, in one-letter code: UvrABC system protein C (689 aa).

The GIY-YIG domain maps to 16-95 (TNPGVYRFRD…IKEFAPRFNI (80 aa)). One can recognise a UVR domain in the interval 208 to 243 (KPYIRELTRQMNEAAECMDFETAAARRDDVGALERV). Residues 316-337 (LAPAASGRRRTARHGSEDVVGQ) form a disordered region.

Belongs to the UvrC family. As to quaternary structure, interacts with UvrB in an incision complex.

It localises to the cytoplasm. Functionally, the UvrABC repair system catalyzes the recognition and processing of DNA lesions. UvrC both incises the 5' and 3' sides of the lesion. The N-terminal half is responsible for the 3' incision and the C-terminal half is responsible for the 5' incision. The chain is UvrABC system protein C from Kocuria rhizophila (strain ATCC 9341 / DSM 348 / NBRC 103217 / DC2201).